The following is a 77-amino-acid chain: Large ribosomal subunit protein uL24 (77 aa).

This sequence belongs to the universal ribosomal protein uL24 family. Part of the 50S ribosomal subunit.

Its function is as follows. One of two assembly initiator proteins, it binds directly to the 5'-end of the 23S rRNA, where it nucleates assembly of the 50S subunit. One of the proteins that surrounds the polypeptide exit tunnel on the outside of the subunit. The chain is Large ribosomal subunit protein uL24 from Campylobacter jejuni subsp. doylei (strain ATCC BAA-1458 / RM4099 / 269.97).